The following is a 346-amino-acid chain: Eukaryotic translation initiation factor 3 subunit I (346 aa).

5 WD repeats span residues G8–H49, G50–D91, C145–N184, E189–T228, and G286–M325.

It belongs to the eIF-3 subunit I family. As to quaternary structure, component of the eukaryotic translation initiation factor 3 (eIF-3) complex.

It localises to the cytoplasm. In terms of biological role, component of the eukaryotic translation initiation factor 3 (eIF-3) complex, which is involved in protein synthesis of a specialized repertoire of mRNAs and, together with other initiation factors, stimulates binding of mRNA and methionyl-tRNAi to the 40S ribosome. The eIF-3 complex specifically targets and initiates translation of a subset of mRNAs involved in cell proliferation. This Neurospora crassa (strain ATCC 24698 / 74-OR23-1A / CBS 708.71 / DSM 1257 / FGSC 987) protein is Eukaryotic translation initiation factor 3 subunit I (tif-34).